Consider the following 1001-residue polypeptide: MARQEQANDVFALTSFLYGGNADYIEELYAKYEDDPNSVDPQWRDFFAKLGDNADDVKKNAEGASWTRKNWPIAANGELISALDGNWAEVEKHVTDKLKGKAAKGEAKGATGAALTSEEITQAARDSVRAIMMIRAYRMRGHLHANLDPLGLSEKPNDYNELEPENYGFTPADYNRKIFIDNVLGLEYATVPEMLDILKRTYCGTIGVEFMHISDPAEKAWIQERIEGPDKKVAFTPEGKKAILSKLIEAEGFEQFIDVKYKGTKRFGLDGGESLIPALEQIVKRGGAMGVKEIIFGMAHRGRLNVLSQVMGKPHRAIFHEFKGGSYAPDDVEGSGDVKYHLGASSDREFDGNKVHLSLTANPSHLEIVNPVVMGKARAKQDLLAGRTRDDMVPLATRAKVLPLLLHGDAAFAGQGVVAECLGLSGLKGHRVAGTLHFIINNQIGFTTNPAFSRSSPYPSDVAKMIEAPIFHVNGDDPEAVVFAAKVATEFRMTFHKPVVIDMFCYRRFGHNEGDEPSFTQPLMYKAIRAHKTTVQLYSDKLIAEGLIKQEEIDQMKAQWRENLETEFDAGQSYKPNKADWLDGAWAGLRTADNADEQRRGKTAVPMKTLKEIGKKLVEVPKDFHVHRTIQRFLDNRAKMMETGEGIDWATAESLAFGSLVAEGSPIRLSGQDVERGTFSQRHTVLYDQETQNRYIPLNNIQKGQAIYEAINSMLSEEAVLGYEYGYSLSDPRALVLWEAQFGDFANGAQVVFDQFISSGERKWLRMSGLVCLLPHGYEGQGPEHSSARLERWLQMCAEDNMQVANVTTPANYFHILRRQMKRDFRKPLIMMTPKSLLRHKRAVSTLNELSGESSFHRLLWDDAQYNKDEGIKLQKDAKIRRVVLCSGKVYYDLYEEREKRGIDDVYLLRVEQLYPFPAKALINELSRFRHAEMVWCQEEPKNMGAWSFIDPYLEWVLAHIDAKHQRVRYAGRPAAASPATGLMSKHLAQLAAFLEDALGN.

Belongs to the alpha-ketoglutarate dehydrogenase family. In terms of assembly, homodimer. Part of the 2-oxoglutarate dehydrogenase (OGDH) complex composed of E1 (2-oxoglutarate dehydrogenase), E2 (dihydrolipoamide succinyltransferase) and E3 (dihydrolipoamide dehydrogenase); the complex contains multiple copies of the three enzymatic components (E1, E2 and E3). Requires thiamine diphosphate as cofactor.

It catalyses the reaction N(6)-[(R)-lipoyl]-L-lysyl-[protein] + 2-oxoglutarate + H(+) = N(6)-[(R)-S(8)-succinyldihydrolipoyl]-L-lysyl-[protein] + CO2. Its function is as follows. E1 component of the 2-oxoglutarate dehydrogenase (OGDH) complex which catalyzes the decarboxylation of 2-oxoglutarate, the first step in the conversion of 2-oxoglutarate to succinyl-CoA and CO(2). The chain is 2-oxoglutarate dehydrogenase E1 component from Brucella anthropi (strain ATCC 49188 / DSM 6882 / CCUG 24695 / JCM 21032 / LMG 3331 / NBRC 15819 / NCTC 12168 / Alc 37) (Ochrobactrum anthropi).